A 95-amino-acid polypeptide reads, in one-letter code: Signal recognition particle 19 kDa protein (95 aa).

The protein belongs to the SRP19 family. In terms of assembly, part of the signal recognition particle protein translocation system, which is composed of SRP and FtsY. Archaeal SRP consists of a 7S RNA molecule of 300 nucleotides and two protein subunits: SRP54 and SRP19.

The protein resides in the cytoplasm. In terms of biological role, involved in targeting and insertion of nascent membrane proteins into the cytoplasmic membrane. Binds directly to 7S RNA and mediates binding of the 54 kDa subunit of the SRP. This chain is Signal recognition particle 19 kDa protein, found in Methanococcoides burtonii (strain DSM 6242 / NBRC 107633 / OCM 468 / ACE-M).